Consider the following 322-residue polypeptide: Gluconeogenesis factor (322 aa).

Residues Thr-13, 217–219 (NVM), 263–267 (KYAKE), and 300–301 (RH) each bind NAD(+).

Belongs to the gluconeogenesis factor family.

The protein localises to the cytoplasm. Its function is as follows. Required for morphogenesis under gluconeogenic growth conditions. In Halalkalibacterium halodurans (strain ATCC BAA-125 / DSM 18197 / FERM 7344 / JCM 9153 / C-125) (Bacillus halodurans), this protein is Gluconeogenesis factor.